We begin with the raw amino-acid sequence, 44 residues long: Keratin-associated protein 20-3 (44 aa).

The protein belongs to the KRTAP type 20 family. In terms of assembly, interacts with hair keratins.

Functionally, in the hair cortex, hair keratin intermediate filaments are embedded in an interfilamentous matrix, consisting of hair keratin-associated proteins (KRTAP), which are essential for the formation of a rigid and resistant hair shaft through their extensive disulfide bond cross-linking with abundant cysteine residues of hair keratins. The matrix proteins include the high-sulfur and high-glycine-tyrosine keratins. The sequence is that of Keratin-associated protein 20-3 (KRTAP20-3) from Homo sapiens (Human).